The sequence spans 401 residues: Glutamyl-tRNA reductase (401 aa).

Residues 45–48 (TCNR), S101, 106–108 (EDQ), and Q112 contribute to the substrate site. Residue C46 is the Nucleophile of the active site. Residue 177-182 (GYGEVG) coordinates NADP(+).

Belongs to the glutamyl-tRNA reductase family. As to quaternary structure, homodimer.

It catalyses the reaction (S)-4-amino-5-oxopentanoate + tRNA(Glu) + NADP(+) = L-glutamyl-tRNA(Glu) + NADPH + H(+). The protein operates within porphyrin-containing compound metabolism; protoporphyrin-IX biosynthesis; 5-aminolevulinate from L-glutamyl-tRNA(Glu): step 1/2. Catalyzes the NADPH-dependent reduction of glutamyl-tRNA(Glu) to glutamate 1-semialdehyde (GSA). This Clostridium beijerinckii (strain ATCC 51743 / NCIMB 8052) (Clostridium acetobutylicum) protein is Glutamyl-tRNA reductase.